A 198-amino-acid polypeptide reads, in one-letter code: MGTHVAPWKQLLFGAIEANSHLSHSSYVQLATIGLNGRPSNRTVVFRGFEENSDRIQINTDLRSRKIEELKHCPFSEMCWYFSDTWEQFRINGRIEVIDASNPDQTKLQQREKAWFANSLRSRLIYVCPTPGSPCNSEQSSQQVKLDPSSGPVPEYCLLLLEPEKVDYLNLKTNQRLFFSSMATGTGEKCWTSEKVNP.

Residues R42, 59–60, K66, and 121–122 each bind FMN; these read NT and RS.

Belongs to the pyridoxamine 5'-phosphate oxidase family. As to quaternary structure, homodimer. It depends on FMN as a cofactor.

It catalyses the reaction pyridoxamine 5'-phosphate + O2 + H2O = pyridoxal 5'-phosphate + H2O2 + NH4(+). It carries out the reaction pyridoxine 5'-phosphate + O2 = pyridoxal 5'-phosphate + H2O2. It participates in cofactor metabolism; pyridoxal 5'-phosphate salvage; pyridoxal 5'-phosphate from pyridoxamine 5'-phosphate: step 1/1. It functions in the pathway cofactor metabolism; pyridoxal 5'-phosphate salvage; pyridoxal 5'-phosphate from pyridoxine 5'-phosphate: step 1/1. In terms of biological role, catalyzes the oxidation of either pyridoxine 5'-phosphate (PNP) or pyridoxamine 5'-phosphate (PMP) into pyridoxal 5'-phosphate (PLP). Has an in vitro catalytic efficiency for PNP approximately 300-fold lower than that of PPOX1. This is Pyridoxine/pyridoxamine 5'-phosphate oxidase 2 (PPOX2) from Arabidopsis thaliana (Mouse-ear cress).